The primary structure comprises 426 residues: MLGALFLSTAASAAVQSIDKVVAIVDNDVVMQSQLDQRVHEVQQTIAKRGGGVPPTSVLEQQVLERLIVENLQLQIGERSGIRITDEELNQAIGTIAQRNSMSIEQFRAALAHDGLSYEDARDQVRREMIISRVRQRRVAERIQVSEQEVKNFLASDLGKMQLSEELHLANILIPTPESANSEAIQSAARQAMEVYQQLKQGADFAQLAIARSGSDNALEGGDMGWRKAAQLPPPFDRELSAMAVGDITQPARTPGGFIILKLLDKRGGGNQVRDEVHVRHILIKPSEIRSEEETKRLAQKLYDRIEAGEDFAELAKSYSEDPGSALNGGDLNWIDPNALVPEFREVMAKTPQGQLSKPFKSPYGWHVLEVLGRRATDSTSQAREQQAMTVLRNRKYDEELQTWLRQIRDEAYVEIKLPGAEQAAQ.

An N-terminal signal peptide occupies residues 1-13 (MLGALFLSTAASA). PpiC domains follow at residues 164–265 (SEEL…KLLD) and 274–373 (RDEV…EVLG).

It localises to the periplasm. The enzyme catalyses [protein]-peptidylproline (omega=180) = [protein]-peptidylproline (omega=0). In terms of biological role, chaperone involved in the correct folding and assembly of outer membrane proteins. Recognizes specific patterns of aromatic residues and the orientation of their side chains, which are found more frequently in integral outer membrane proteins. May act in both early periplasmic and late outer membrane-associated steps of protein maturation. The polypeptide is Chaperone SurA (Pseudomonas fluorescens (strain ATCC BAA-477 / NRRL B-23932 / Pf-5)).